We begin with the raw amino-acid sequence, 749 residues long: Tryptophan 2-monooxygenase (749 aa).

FMN-binding residues include S232, E252, K260, and R280. Residue R280 participates in substrate binding.

This sequence belongs to the tryptophan 2-monooxygenase family. Requires FMN as cofactor.

The enzyme catalyses L-tryptophan + O2 = indole-3-acetamide + CO2 + H2O. It participates in plant hormone metabolism; auxin biosynthesis. The polypeptide is Tryptophan 2-monooxygenase (aux1) (Rhizobium rhizogenes (Agrobacterium rhizogenes)).